Here is a 234-residue protein sequence, read N- to C-terminus: Ribosomal RNA small subunit methyltransferase G (234 aa).

S-adenosyl-L-methionine-binding positions include G96, L101, 119–121 (DAT), 147–148 (VE), and R161.

Belongs to the methyltransferase superfamily. RNA methyltransferase RsmG family.

Its subcellular location is the cytoplasm. In terms of biological role, specifically methylates the N7 position of a guanine in 16S rRNA. This is Ribosomal RNA small subunit methyltransferase G from Chlorobium chlorochromatii (strain CaD3).